Reading from the N-terminus, the 355-residue chain is Protein-glutamate methylesterase/protein-glutamine glutaminase 3 (355 aa).

The Response regulatory domain occupies S8–K123. At D59 the chain carries 4-aspartylphosphate. Positions R139–A161 are disordered. Pro residues predominate over residues G145–P159. The 191-residue stretch at P160–S350 folds into the CheB-type methylesterase domain. Catalysis depends on residues S172, H199, and D292.

This sequence belongs to the CheB family. In terms of processing, phosphorylated by CheA. Phosphorylation of the N-terminal regulatory domain activates the methylesterase activity.

Its subcellular location is the cytoplasm. The catalysed reaction is [protein]-L-glutamate 5-O-methyl ester + H2O = L-glutamyl-[protein] + methanol + H(+). It catalyses the reaction L-glutaminyl-[protein] + H2O = L-glutamyl-[protein] + NH4(+). Involved in chemotaxis. Part of a chemotaxis signal transduction system that modulates chemotaxis in response to various stimuli. Catalyzes the demethylation of specific methylglutamate residues introduced into the chemoreceptors (methyl-accepting chemotaxis proteins or MCP) by CheR. Also mediates the irreversible deamidation of specific glutamine residues to glutamic acid. The sequence is that of Protein-glutamate methylesterase/protein-glutamine glutaminase 3 from Paramagnetospirillum magneticum (strain ATCC 700264 / AMB-1) (Magnetospirillum magneticum).